Reading from the N-terminus, the 505-residue chain is Chemotaxis regulatory protein ChePep (505 aa).

2 disordered regions span residues 154–403 (EPNN…EDIP) and 420–465 (EAVA…SSPL). Composition is skewed to basic and acidic residues over residues 172 to 263 (EEVK…EKTQ), 289 to 311 (ENKEKTQESAEIPQDKEIQEVVT), 337 to 346 (QAHELEKQEI), 359 to 373 (QDKEVQELEIPKEET), and 386 to 398 (PQEKETQEDHYES). The span at 440 to 451 (TETSKNENNTET) shows a compositional bias: low complexity.

As to quaternary structure, interacts with CheZ; the interaction is essential for each other polar localization.

Its subcellular location is the cytoplasm. Plays an essential role in chemotaxis. Regulates flagellar rotation through the formation of a complex with chemotaxis protein CheZ. Plays a major role in colonization of the stomach. In Helicobacter pylori (strain ATCC 700392 / 26695) (Campylobacter pylori), this protein is Chemotaxis regulatory protein ChePep.